Reading from the N-terminus, the 185-residue chain is Putative F-box protein At3g17400 (185 aa).

Residues 1-47 (MMTLSDLPSDLAEEVLSKIPVTSLRGVRATCKKWNTLSKDRSFTRKH) form the F-box domain.

The sequence is that of Putative F-box protein At3g17400 from Arabidopsis thaliana (Mouse-ear cress).